Here is a 362-residue protein sequence, read N- to C-terminus: Holliday junction branch migration complex subunit RuvB (362 aa).

A disordered region spans residues 1 to 20; that stretch reads MKRTIMTNTDTFEQPNTGAN. Residues 15-203 form a large ATPase domain (RuvB-L) region; it reads PNTGANEESL…FGFTAHLDFY (189 aa). ATP contacts are provided by residues Leu42, Arg43, Gly84, Lys87, Thr88, Thr89, 150–152, Arg193, Tyr203, and Arg240; that span reads EDF. Thr88 is a Mg(2+) binding site. The small ATPAse domain (RuvB-S) stretch occupies residues 204–274; the sequence is PHEELEKLIE…DVKEALALYQ (71 aa). The segment at 277–362 is head domain (RuvB-H); it reads TEGLDRLDIA…ESAYDVNEMS (86 aa). Residues Arg332 and Arg337 each coordinate DNA.

This sequence belongs to the RuvB family. As to quaternary structure, homohexamer. Forms an RuvA(8)-RuvB(12)-Holliday junction (HJ) complex. HJ DNA is sandwiched between 2 RuvA tetramers; dsDNA enters through RuvA and exits via RuvB. An RuvB hexamer assembles on each DNA strand where it exits the tetramer. Each RuvB hexamer is contacted by two RuvA subunits (via domain III) on 2 adjacent RuvB subunits; this complex drives branch migration. In the full resolvosome a probable DNA-RuvA(4)-RuvB(12)-RuvC(2) complex forms which resolves the HJ.

The protein localises to the cytoplasm. It catalyses the reaction ATP + H2O = ADP + phosphate + H(+). Functionally, the RuvA-RuvB-RuvC complex processes Holliday junction (HJ) DNA during genetic recombination and DNA repair, while the RuvA-RuvB complex plays an important role in the rescue of blocked DNA replication forks via replication fork reversal (RFR). RuvA specifically binds to HJ cruciform DNA, conferring on it an open structure. The RuvB hexamer acts as an ATP-dependent pump, pulling dsDNA into and through the RuvAB complex. RuvB forms 2 homohexamers on either side of HJ DNA bound by 1 or 2 RuvA tetramers; 4 subunits per hexamer contact DNA at a time. Coordinated motions by a converter formed by DNA-disengaged RuvB subunits stimulates ATP hydrolysis and nucleotide exchange. Immobilization of the converter enables RuvB to convert the ATP-contained energy into a lever motion, pulling 2 nucleotides of DNA out of the RuvA tetramer per ATP hydrolyzed, thus driving DNA branch migration. The RuvB motors rotate together with the DNA substrate, which together with the progressing nucleotide cycle form the mechanistic basis for DNA recombination by continuous HJ branch migration. Branch migration allows RuvC to scan DNA until it finds its consensus sequence, where it cleaves and resolves cruciform DNA. The polypeptide is Holliday junction branch migration complex subunit RuvB (Bifidobacterium adolescentis (strain ATCC 15703 / DSM 20083 / NCTC 11814 / E194a)).